The sequence spans 426 residues: Glutamyl-tRNA reductase (426 aa).

Residues 49 to 52, Ser-109, 114 to 116, and Gln-120 each bind substrate; these read TCNR and EGQ. Catalysis depends on Cys-50, which acts as the Nucleophile. 189 to 194 contacts NADP(+); that stretch reads GAGETG.

This sequence belongs to the glutamyl-tRNA reductase family. As to quaternary structure, homodimer.

The enzyme catalyses (S)-4-amino-5-oxopentanoate + tRNA(Glu) + NADP(+) = L-glutamyl-tRNA(Glu) + NADPH + H(+). It participates in porphyrin-containing compound metabolism; protoporphyrin-IX biosynthesis; 5-aminolevulinate from L-glutamyl-tRNA(Glu): step 1/2. Its pathway is porphyrin-containing compound metabolism; chlorophyll biosynthesis. Functionally, catalyzes the NADPH-dependent reduction of glutamyl-tRNA(Glu) to glutamate 1-semialdehyde (GSA). The chain is Glutamyl-tRNA reductase from Chlorobium chlorochromatii (strain CaD3).